A 34-amino-acid polypeptide reads, in one-letter code: METNDLGFVASLLFILVPAIFLIVLYIGTNRSES.

A helical membrane pass occupies residues 7–27 (GFVASLLFILVPAIFLIVLYI).

This sequence belongs to the PsbM family. As to quaternary structure, PSII is composed of 1 copy each of membrane proteins PsbA, PsbB, PsbC, PsbD, PsbE, PsbF, PsbH, PsbI, PsbJ, PsbK, PsbL, PsbM, PsbT, PsbX, PsbY, PsbZ, Psb30/Ycf12, peripheral proteins PsbO, CyanoQ (PsbQ), PsbU, PsbV and a large number of cofactors. It forms dimeric complexes.

It is found in the cellular thylakoid membrane. Its function is as follows. One of the components of the core complex of photosystem II (PSII). PSII is a light-driven water:plastoquinone oxidoreductase that uses light energy to abstract electrons from H(2)O, generating O(2) and a proton gradient subsequently used for ATP formation. It consists of a core antenna complex that captures photons, and an electron transfer chain that converts photonic excitation into a charge separation. This subunit is found at the monomer-monomer interface. The protein is Photosystem II reaction center protein M of Parasynechococcus marenigrum (strain WH8102).